Here is a 331-residue protein sequence, read N- to C-terminus: Putative mitochondrial 2-oxoglutarate/malate carrier protein (331 aa).

3 Solcar repeats span residues 39–128 (VRAA…FMSR), 140–231 (VGFK…AKAQ), and 239–329 (SSKV…LGWL). 6 helical membrane-spanning segments follow: residues 42–62 (ALPF…IQPI), 103–121 (GLSA…RIGC), 148–168 (AGLA…LALI), 199–219 (GVAA…ALNF), 245–265 (LSAS…FDFV), and 309–329 (YVRI…LGWL).

Belongs to the mitochondrial carrier (TC 2.A.29) family.

Its subcellular location is the mitochondrion inner membrane. Its function is as follows. Catalyzes the transport of 2-oxoglutarate across the inner mitochondrial membrane. The sequence is that of Putative mitochondrial 2-oxoglutarate/malate carrier protein (mic-33) from Neurospora crassa (strain ATCC 24698 / 74-OR23-1A / CBS 708.71 / DSM 1257 / FGSC 987).